The following is a 174-amino-acid chain: SUSHI domain-containing protein E3 (174 aa).

A signal peptide spans 1–20 (MATEVQFACALVVLLGCGYA). The Sushi domain occupies 35–97 (QNCTTYPSIE…WTNGPPSCVK (63 aa)). 2 cysteine pairs are disulfide-bonded: Cys37–Cys78 and Cys64–Cys95. The segment covering 108-127 (STSTTPVTTGTFPDPQNTTH) has biased composition (low complexity). The tract at residues 108–133 (STSTTPVTTGTFPDPQNTTHPTHHTV) is disordered. A helical membrane pass occupies residues 145–165 (FGYTPWAIITLVVIILLVVWI).

The protein resides in the host membrane. The chain is SUSHI domain-containing protein E3 (E3) from Equine herpesvirus 2 (strain 86/87) (EHV-2).